The sequence spans 911 residues: Nitrate reductase [NADH] (911 aa).

Positions 1–10 (MAASVENRQY) are enriched in polar residues. The interval 1-71 (MAASVENRQY…SEDEDDDDEK (71 aa)) is disordered. Residues 61–71 (SSEDEDDDDEK) show a composition bias toward acidic residues. Position 188 (Cys188) interacts with Mo-molybdopterin. One can recognise a Cytochrome b5 heme-binding domain in the interval 536-611 (SKMYSMSEVR…LEDFRIGELI (76 aa)). His571 and His594 together coordinate heme. An FAD-binding FR-type domain is found at 654–766 (REKIPCKLVD…KGPLGHIEYQ (113 aa)). FAD is bound by residues 706–709 (RAYT), 723–727 (VVKIY), Phe728, Phe735, 740–742 (QMS), and Thr793.

It belongs to the nitrate reductase family. As to quaternary structure, homodimer. Requires FAD as cofactor. Heme is required as a cofactor. Mo-molybdopterin serves as cofactor.

The catalysed reaction is nitrite + NAD(+) + H2O = nitrate + NADH + H(+). Functionally, nitrate reductase is a key enzyme involved in the first step of nitrate assimilation in plants, fungi and bacteria. In Solanum lycopersicum (Tomato), this protein is Nitrate reductase [NADH] (NIA).